The sequence spans 375 residues: Filamin-binding LIM protein 1 (375 aa).

The interval 1-69 is filamin-binding; it reads MASKPEKRVA…KTWTPSGKTN (69 aa). Residues 40-176 form a disordered region; sequence ARPWEMLPTK…PPPEEPVTLP (137 aa). A compositionally biased stretch (polar residues) spans 60-83; the sequence is KTWTPSGKTNASLSGVTPQLSNGG. 2 stretches are compositionally biased toward pro residues: residues 98–107 and 133–144; these read LPPPPPPPSA and LPPPPPPPPPQA. LIM zinc-binding domains follow at residues 183-244, 245-302, and 303-372; these read DVCG…TLEK, CGKC…RKFA, and PVCS…RSAA. The interval 278–375 is FERMT2-binding; sequence ISDESFALDS…HLKRSAAGCC (98 aa).

As to quaternary structure, interacts with FERMT2, FLNA, FLNB and FLNC. Interacts with NKX2-5.

It localises to the cell junction. Its subcellular location is the focal adhesion. It is found in the cytoplasm. The protein resides in the cytoskeleton. The protein localises to the stress fiber. Functionally, serves as an anchoring site for cell-ECM adhesion proteins and filamin-containing actin filaments. Is implicated in cell shape modulation (spreading) and motility. May participate in the regulation of filamin-mediated cross-linking and stabilization of actin filaments. May also regulate the assembly of filamin-containing signaling complexes that control actin assembly. Promotes dissociation of FLNA from ITGB3 and ITGB7. Promotes activation of integrins and regulates integrin-mediated cell-cell adhesion. In Mus musculus (Mouse), this protein is Filamin-binding LIM protein 1 (Fblim1).